Reading from the N-terminus, the 555-residue chain is Glutamine--tRNA ligase (555 aa).

The short motif at 35 to 45 (PEPNGYLHIGH) is the 'HIGH' region element. ATP is bound by residues 36–38 (EPN) and 42–48 (HIGHAKS). Residues aspartate 68 and tyrosine 213 each contribute to the L-glutamine site. ATP is bound by residues threonine 232 and 262–263 (RL). The short motif at 269-273 (ITSKR) is the 'KMSKS' region element.

This sequence belongs to the class-I aminoacyl-tRNA synthetase family. In terms of assembly, monomer.

The protein resides in the cytoplasm. The catalysed reaction is tRNA(Gln) + L-glutamine + ATP = L-glutaminyl-tRNA(Gln) + AMP + diphosphate. This is Glutamine--tRNA ligase from Ectopseudomonas mendocina (strain ymp) (Pseudomonas mendocina).